Here is a 177-residue protein sequence, read N- to C-terminus: Putative acetyltransferase FG08082 (177 aa).

Residues 81 to 174 (EEWEQVGLVR…VSIAMVEGPG (94 aa)) enclose the N-acetyltransferase domain.

It belongs to the acetyltransferase family.

The protein operates within mycotoxin biosynthesis. Its function is as follows. Putative acetyltransferase; part of the gene cluster that mediates the biosynthesis of butenolide, a mycotoxin that shows antibiotic activity but does not seem to play a major role in the spread of head blight in wheat. Butenolide is derived from glutamic acid via a 4-acetamido-2-butenoic acid intermediate. The predicted function of the NADH:flavin oxidoreductase FG08077, the cytochrome P450 monooxygenase FG08079, the decarboxylase FG08083, and the putative acetyltransferase FG08082 are consistent with this pathway, however, the respective activities of the butelonide biosynthesis cluster enzymes have still to be experimentally determined. The sequence is that of Putative acetyltransferase FG08082 from Gibberella zeae (strain ATCC MYA-4620 / CBS 123657 / FGSC 9075 / NRRL 31084 / PH-1) (Wheat head blight fungus).